A 454-amino-acid chain; its full sequence is Photosystem II CP47 reaction center protein (454 aa).

6 helical membrane passes run 6 to 26 (MFVL…GWTI), 47 to 61 (IILS…IWHW), 86 to 102 (GIHL…FGAF), 149 to 164 (IAAG…FHLS), 183 to 198 (VLSS…AFVV), and 403 to 418 (SFAL…HGAR).

This sequence belongs to the PsbB/PsbC family. PsbB subfamily. As to quaternary structure, PSII is composed of 1 copy each of membrane proteins PsbA, PsbB, PsbC, PsbD, PsbE, PsbF, PsbH, PsbI, PsbJ, PsbK, PsbL, PsbM, PsbT, PsbX, PsbY, PsbZ, Psb30/Ycf12, at least 3 peripheral proteins of the oxygen-evolving complex and a large number of cofactors. It forms dimeric complexes. Binds multiple chlorophylls. PSII binds additional chlorophylls, carotenoids and specific lipids. is required as a cofactor.

It localises to the plastid. Its subcellular location is the chloroplast thylakoid membrane. Its function is as follows. One of the components of the core complex of photosystem II (PSII). It binds chlorophyll and helps catalyze the primary light-induced photochemical processes of PSII. PSII is a light-driven water:plastoquinone oxidoreductase, using light energy to abstract electrons from H(2)O, generating O(2) and a proton gradient subsequently used for ATP formation. In Ostreococcus tauri, this protein is Photosystem II CP47 reaction center protein.